We begin with the raw amino-acid sequence, 113 residues long: Small ribosomal subunit protein uS17 (113 aa).

Belongs to the universal ribosomal protein uS17 family. As to quaternary structure, part of the 30S ribosomal subunit.

In terms of biological role, one of the primary rRNA binding proteins, it binds specifically to the 5'-end of 16S ribosomal RNA. In Sulfurisphaera tokodaii (strain DSM 16993 / JCM 10545 / NBRC 100140 / 7) (Sulfolobus tokodaii), this protein is Small ribosomal subunit protein uS17.